The following is a 306-amino-acid chain: Polyisoprenyl-teichoic acid--peptidoglycan teichoic acid transferase TagU (306 aa).

At 1–11 (MRAEKRKKKKK) the chain is on the cytoplasmic side. The chain crosses the membrane as a helical; Signal-anchor for type II membrane protein span at residues 12–32 (ILYTIIALIGIFVLSTGSYAY). At 33–306 (YLWHKAASTV…TAELKESLNK (274 aa)) the chain is on the extracellular side.

The protein belongs to the LytR/CpsA/Psr (LCP) family.

Its subcellular location is the cell membrane. Its pathway is cell wall biogenesis. In terms of biological role, may catalyze the final step in cell wall teichoic acid biosynthesis, the transfer of the anionic cell wall polymers (APs) from their lipid-linked precursor to the cell wall peptidoglycan (PG). The sequence is that of Polyisoprenyl-teichoic acid--peptidoglycan teichoic acid transferase TagU from Bacillus licheniformis (strain ATCC 14580 / DSM 13 / JCM 2505 / CCUG 7422 / NBRC 12200 / NCIMB 9375 / NCTC 10341 / NRRL NRS-1264 / Gibson 46).